The following is a 439-amino-acid chain: Tol-Pal system protein TolB (439 aa).

A signal peptide spans 1-22; the sequence is MKKPLRWLAALTVLLLPLSALA.

The protein belongs to the TolB family. As to quaternary structure, the Tol-Pal system is composed of five core proteins: the inner membrane proteins TolA, TolQ and TolR, the periplasmic protein TolB and the outer membrane protein Pal. They form a network linking the inner and outer membranes and the peptidoglycan layer.

It localises to the periplasm. Part of the Tol-Pal system, which plays a role in outer membrane invagination during cell division and is important for maintaining outer membrane integrity. This Xanthomonas oryzae pv. oryzae (strain KACC10331 / KXO85) protein is Tol-Pal system protein TolB.